Reading from the N-terminus, the 233-residue chain is PEP2-like protein NECHADRAFT_97050 (233 aa).

The protein belongs to the PEP2 family.

Functionally, may contribute to the ability of the fungus to cause disease on pea plants. This chain is PEP2-like protein NECHADRAFT_97050, found in Fusarium vanettenii (strain ATCC MYA-4622 / CBS 123669 / FGSC 9596 / NRRL 45880 / 77-13-4) (Fusarium solani subsp. pisi).